The following is a 142-amino-acid chain: Small ribosomal subunit protein uS12 (142 aa).

Belongs to the universal ribosomal protein uS12 family. As to quaternary structure, part of the 30S ribosomal subunit.

Functionally, with S4 and S5 plays an important role in translational accuracy. Located at the interface of the 30S and 50S subunits. This Methanosarcina barkeri (strain Fusaro / DSM 804) protein is Small ribosomal subunit protein uS12.